A 392-amino-acid chain; its full sequence is MRGRTMSVIKMTDLELAGKRVFIRADLNVPVKDGKVTSDARILASLPTIKRCLEAGAKVMVTSHLGRPTEGEYNEEFSLAPVVNYLNDALDCDVKLAKDYLDGIELNAGELVVLENVRFNKGEKKNDEALSKKYAALCDIFVMDAFGTAHRAQASTHGVGMNAAIACAGPLLANELEALGKAMDNPARPLVAIVGGSKVSTKLTVLESLSKIADQLVVGGGIANTFIAAEGHNVGKSLYEADLVETAKKLMKDCAIPVATDVACAKAFDENAEAVIKHVSEVQDDDMIFDLGPDSTAVLAEIISNAKTILWNGPVGVFEFKNFEAGTAGIAKAIADSEGFSVAGGGDTLAAIDKFGIKADVSYISTGGGAFLEFVEGKVLPAVAMLEERAKA.

Residues 26–28, R41, 64–67, R118, and R151 contribute to the substrate site; these read DLN and HLGR. Residues K202, E319, and 345-348 each bind ATP; that span reads GGDT.

It belongs to the phosphoglycerate kinase family. In terms of assembly, monomer.

The protein resides in the cytoplasm. The catalysed reaction is (2R)-3-phosphoglycerate + ATP = (2R)-3-phospho-glyceroyl phosphate + ADP. The protein operates within carbohydrate degradation; glycolysis; pyruvate from D-glyceraldehyde 3-phosphate: step 2/5. This Photobacterium profundum (strain SS9) protein is Phosphoglycerate kinase.